Reading from the N-terminus, the 231-residue chain is Probable glutathione S-transferase (231 aa).

A GST N-terminal domain is found at 4–96; that stretch reads PNFELYGYFR…YLEEALPTNA (93 aa). Residues Ser-14, Gln-43, Val-57, 80-81, Gln-124, and 128-130 each bind glutathione; these read QS and NLK. In terms of domain architecture, GST C-terminal spans 105–227; that stretch reads NPVARAHVRT…HWQKQEDTPE (123 aa).

This sequence belongs to the GST superfamily. Zeta family. As to quaternary structure, homodimer.

It carries out the reaction RX + glutathione = an S-substituted glutathione + a halide anion + H(+). Its function is as follows. Probable glutathione S-transferase. In Coccidioides immitis (strain RS) (Valley fever fungus), this protein is Probable glutathione S-transferase.